The primary structure comprises 318 residues: Lymphatic vessel endothelial hyaluronic acid receptor 1 (318 aa).

The N-terminal stretch at 1-23 (MLQHTSLVLLLASIWTTRHPVQG) is a signal peptide. The Extracellular segment spans residues 24–234 (ADLVQDLSIS…EAAGFGGVPT (211 aa)). Residues 39-129 (GVALVGRNKN…SQKFKAYCHN (91 aa)) form the Link domain. An N-linked (GlcNAc...) asparagine glycan is attached at asparagine 52. Cystine bridges form between cysteine 60–cysteine 127 and cysteine 84–cysteine 105. N-linked (GlcNAc...) asparagine glycosylation occurs at asparagine 129. Residues 235-255 (ALLVLALLFFGAAAVLAVCYV) traverse the membrane as a helical segment. The Cytoplasmic segment spans residues 256 to 318 (KRYVKAFPFT…TTVRCLEAEV (63 aa)). Positions 284 to 305 (ADDVNANEESKKTIKNPEEAKS) are enriched in basic and acidic residues. The tract at residues 284 to 318 (ADDVNANEESKKTIKNPEEAKSPPKTTVRCLEAEV) is disordered.

In terms of assembly, homodimer; disulfide-linked. Interacts with PDGFB and IGFBP3. Forms a transient ternary complex with PDGFB and PDGFRB in TGN. In terms of processing, O-glycosylated.

It localises to the membrane. Ligand-specific transporter trafficking between intracellular organelles (TGN) and the plasma membrane. Plays a role in autocrine regulation of cell growth mediated by growth regulators containing cell surface retention sequence binding (CRS). May act as a hyaluronan (HA) transporter, either mediating its uptake for catabolism within lymphatic endothelial cells themselves, or its transport into the lumen of afferent lymphatic vessels for subsequent re-uptake and degradation in lymph nodes. Binds to pericelluar hyaluronan matrices deposited on the surface of leukocytes and facilitates cell adhesion and migration through lymphatic endothelium. In Mus musculus (Mouse), this protein is Lymphatic vessel endothelial hyaluronic acid receptor 1 (Lyve1).